The sequence spans 703 residues: uncharacterized protein (703 aa).

4 helical membrane passes run 23-43 (IAMSGAISAGAYSAGVFDFLI), 69-89 (ALSGASAGAITAAIGVIAAGG), 143-163 (PVISVLNANVLTAIGAEALEA), and 250-270 (PPEWLAFANAALASGAFPIGL). The 313-residue stretch at 23–335 (IAMSGAISAG…INNDPFEFVR (313 aa)) folds into the PNPLA domain. Residues 72–76 (GASAG) carry the GXSXG motif. The Nucleophile role is filled by S74. The Proton acceptor role is filled by D322. A DGA/G motif is present at residues 322–324 (DGG). 3 helical membrane-spanning segments follow: residues 357–377 (VIMIAPFPEGPPFLGDGEPPL), 432–452 (ETFSIASGLLGGFGGFVLEAF), and 644–664 (ILSTLAGAAGANCQVWLAPWT).

It is found in the cell membrane. This is an uncharacterized protein from Sinorhizobium fredii (strain NBRC 101917 / NGR234).